The chain runs to 397 residues: Dimethyladenosine transferase 2, mitochondrial (397 aa).

Residues 1–44 (MRGLAMRLPPRLALSVLAGRGPSCILGSGAATRKDWQERNRRSF) constitute a mitochondrion transit peptide. 3 residues coordinate S-adenosyl-L-methionine: Ile75, Glu124, and Asp150. The tract at residues 329 to 330 (KR) is DNA-binding.

It belongs to the class I-like SAM-binding methyltransferase superfamily. rRNA adenine N(6)-methyltransferase family. KsgA subfamily. Homodimer. Component of the mitochondrial transcription initiation complex, composed at least of TFB2M, TFAM and POLRMT. In this complex TFAM recruits POLRMT to the promoter whereas TFB2M induces structural changes in POLRMT to enable promoter opening and trapping of the DNA non-template strand. Interacts with mitochondrial RNA polymerase POLRMT. Interacts with TFAM.

It localises to the mitochondrion. It catalyses the reaction adenosine in rRNA + S-adenosyl-L-methionine = N(6)-methyladenosine in rRNA + S-adenosyl-L-homocysteine + H(+). S-adenosyl-L-methionine-dependent rRNA methyltransferase which may methylate two specific adjacent adenosines in the loop of a conserved hairpin near the 3'-end of 12S mitochondrial rRNA. Component of the mitochondrial transcription initiation complex, composed at least of TFB2M, TFAM and POLRMT that is required for basal transcription of mitochondrial DNA. In this complex TFAM recruits POLRMT to a specific promoter whereas TFB2M induces structural changes in POLRMT to enable promoter opening and trapping of the DNA non-template strand. Stimulates transcription independently of the methyltransferase activity. The protein is Dimethyladenosine transferase 2, mitochondrial of Rattus norvegicus (Rat).